The primary structure comprises 232 residues: Large ribosomal subunit protein uL1 (232 aa).

Belongs to the universal ribosomal protein uL1 family. As to quaternary structure, part of the 50S ribosomal subunit.

Binds directly to 23S rRNA. The L1 stalk is quite mobile in the ribosome, and is involved in E site tRNA release. Functionally, protein L1 is also a translational repressor protein, it controls the translation of the L11 operon by binding to its mRNA. This Marinobacter nauticus (strain ATCC 700491 / DSM 11845 / VT8) (Marinobacter aquaeolei) protein is Large ribosomal subunit protein uL1.